Reading from the N-terminus, the 826-residue chain is BLOC-2 complex member HPS5 homolog (826 aa).

3 WD repeats span residues 22–61 (KHHNRIKYTCFDISDSYIIFGASSGSLYLFNRNGKFLLLI), 63–102 (NKHGAITSLSISANSKYVAFATQRSLICVYAVNLSAQATP), and 110–149 (DQSVQVTCIHWTQDEKQFYYGDSRGQVSLVLLSSFIGHSL). Residues 422–446 (ALDTHSSGGSSATTERSLSGGSSSR) are compositionally biased toward polar residues. A disordered region spans residues 422–447 (ALDTHSSGGSSATTERSLSGGSSSRA).

This sequence belongs to the HPS5 family. As to expression, expressed in eye pigment granules.

In terms of biological role, has a role in the biogenesis of eye pigment granules. Eye pigment granules are specialized forms of late endosomes or lysosomes. Biogenesis of pigment granules in the eye requires molecular components required for protein delivery to lysosomes. This Drosophila melanogaster (Fruit fly) protein is BLOC-2 complex member HPS5 homolog.